Here is a 108-residue protein sequence, read N- to C-terminus: Bublin coiled-coil protein (108 aa).

Disordered stretches follow at residues M1 to F23 and R67 to S108. The stretch at S25–Q73 forms a coiled coil. The span at E99 to S108 shows a compositional bias: basic and acidic residues.

Belongs to the UPF0184 (EST00098) family.

The protein localises to the cell junction. The protein resides in the cytoplasm. It is found in the cytoskeleton. Functionally, essential for intermediate filament organization in intestinal cells, interacts with intermediate filament and regulates intestinal lumen morphology. This is Bublin coiled-coil protein (bbln) from Takifugu rubripes (Japanese pufferfish).